Reading from the N-terminus, the 259-residue chain is Protein GrpE (259 aa).

Disordered regions lie at residues 1–75 (MNSD…KGSD) and 227–259 (GPGP…KDEN). Over residues 20–40 (NNPSENFVSSSNSNESVNQVE) the composition is skewed to low complexity. Basic and acidic residues predominate over residues 46–60 (EVEHQVKNDSVDTAK). Polar residues predominate over residues 61–73 (EQSSTSCESNIKG).

It belongs to the GrpE family. As to quaternary structure, homodimer.

It localises to the cytoplasm. In terms of biological role, participates actively in the response to hyperosmotic and heat shock by preventing the aggregation of stress-denatured proteins, in association with DnaK and GrpE. It is the nucleotide exchange factor for DnaK and may function as a thermosensor. Unfolded proteins bind initially to DnaJ; upon interaction with the DnaJ-bound protein, DnaK hydrolyzes its bound ATP, resulting in the formation of a stable complex. GrpE releases ADP from DnaK; ATP binding to DnaK triggers the release of the substrate protein, thus completing the reaction cycle. Several rounds of ATP-dependent interactions between DnaJ, DnaK and GrpE are required for fully efficient folding. The sequence is that of Protein GrpE from Prochlorococcus marinus (strain NATL1A).